A 94-amino-acid chain; its full sequence is Integration host factor subunit beta (94 aa).

Belongs to the bacterial histone-like protein family. As to quaternary structure, heterodimer of an alpha and a beta chain.

This protein is one of the two subunits of integration host factor, a specific DNA-binding protein that functions in genetic recombination as well as in transcriptional and translational control. The chain is Integration host factor subunit beta from Escherichia fergusonii (strain ATCC 35469 / DSM 13698 / CCUG 18766 / IAM 14443 / JCM 21226 / LMG 7866 / NBRC 102419 / NCTC 12128 / CDC 0568-73).